Here is a 147-residue protein sequence, read N- to C-terminus: MQTIIKREGLKRSKFHAKRKETLATLPKYEARAVARFVRISPRKARSVINSIRGKNVSEAFNLLEFSSKKAARIVYNVLKSAVANATNNLGLSEENLYVAACYVNDGPRMKRVWPRGRGRADIIQKRMSHITVIVRDREKENETKAK.

Belongs to the universal ribosomal protein uL22 family. Part of the 50S ribosomal subunit.

This protein binds specifically to 23S rRNA; its binding is stimulated by other ribosomal proteins, e.g. L4, L17, and L20. It is important during the early stages of 50S assembly. It makes multiple contacts with different domains of the 23S rRNA in the assembled 50S subunit and ribosome. Its function is as follows. The globular domain of the protein is located near the polypeptide exit tunnel on the outside of the subunit, while an extended beta-hairpin is found that lines the wall of the exit tunnel in the center of the 70S ribosome. In Fervidobacterium nodosum (strain ATCC 35602 / DSM 5306 / Rt17-B1), this protein is Large ribosomal subunit protein uL22.